A 1314-amino-acid chain; its full sequence is E3 ubiquitin-protein ligase RNF123 (1314 aa).

Ala2 is modified (N-acetylalanine). In terms of domain architecture, B30.2/SPRY spans 74-254 (VDSEDEESQG…VAFNFGSRPL (181 aa)). The interval 460 to 481 (HRSSREGKDSAEDRAEAAEERP) is disordered. Residues 462–481 (SSREGKDSAEDRAEAAEERP) are compositionally biased toward basic and acidic residues. Ser675 carries the post-translational modification Phosphoserine. Arg683 carries the asymmetric dimethylarginine modification. The tract at residues 968–974 (WILVRLW) is interaction with NFKB1. Residues Cys1254, Cys1257, Cys1269, His1271, Cys1274, Cys1277, Cys1288, and Cys1291 each coordinate Zn(2+). The RING-type zinc finger occupies 1254 to 1292 (CPICYAHPISAVFQPCGHKSCKACIDQHLMNNKDCFFCK).

Component of the KPC complex composed of RNF123/KPC1 and UBAC1/KPC2. Interacts with UBAC1 and CDKN1B via its N-terminal domain. Interacts with RIGI (via N-terminus) and IFIH1 (via N-terminus). In terms of processing, ubiquitinated, leading to its degradation. Deubiquitinated by USP19, thereby stimulating CDKN1B ubiquitin-dependent degradation.

It is found in the cytoplasm. It catalyses the reaction S-ubiquitinyl-[E2 ubiquitin-conjugating enzyme]-L-cysteine + [acceptor protein]-L-lysine = [E2 ubiquitin-conjugating enzyme]-L-cysteine + N(6)-ubiquitinyl-[acceptor protein]-L-lysine.. Its pathway is protein modification; protein ubiquitination. Catalytic subunit of the KPC complex that acts as E3 ubiquitin-protein ligase. Promotes the ubiquitination and proteasome-mediated degradation of CDKN1B which is the cyclin-dependent kinase inhibitor at the G0-G1 transition of the cell cycle. Also acts as a key regulator of the NF-kappa-B signaling by promoting maturation of the NFKB1 component of NF-kappa-B. Acts by catalyzing ubiquitination of the NFKB1 p105 precursor, leading to limited proteasomal degradation of NFKB1 p105 and generation of the active NFKB1 p50 subunit. Functions also as an inhibitor of innate antiviral signaling mediated by RIGI and IFIH1 independently of its E3 ligase activity. Interacts with the N-terminal CARD domains of RIGI and IFIH1 and competes with the downstream adapter MAVS. This chain is E3 ubiquitin-protein ligase RNF123, found in Oryctolagus cuniculus (Rabbit).